The chain runs to 314 residues: Fibrinogen-like protein 1 (314 aa).

Positions 1–22 (MGEIRSFVLITVALILGKESWV) are cleaved as a signal peptide. Residues 28-62 (CLQEQVRLRAQVRQLETRVKQQQVVIAQLLHEKEV) adopt a coiled-coil conformation. The 233-residue stretch at 76–308 (LGGKRHYADC…SVVMKIRPSD (233 aa)) folds into the Fibrinogen C-terminal domain. Cystine bridges form between cysteine 85-cysteine 114 and cysteine 250-cysteine 263.

Homodimer. Interacts (via the Fibrinogen C-terminal domain) with LAG3 (via Ig-like domains 1 and 2).

The protein localises to the secreted. Functionally, immune suppressive molecule that inhibits antigen-specific T-cell activation by acting as a major ligand of LAG3. Responsible for LAG3 T-cell inhibitory function. Binds LAG3 independently from MHC class II (MHC-II). Secreted by, and promotes growth of, hepatocytes. The protein is Fibrinogen-like protein 1 of Rattus norvegicus (Rat).